The chain runs to 216 residues: ATP-dependent Clp protease proteolytic subunit (216 aa).

Serine 103 (nucleophile) is an active-site residue. Histidine 128 is an active-site residue. Positions arginine 197–proline 216 are disordered.

This sequence belongs to the peptidase S14 family. Fourteen ClpP subunits assemble into 2 heptameric rings which stack back to back to give a disk-like structure with a central cavity, resembling the structure of eukaryotic proteasomes.

It is found in the cytoplasm. It carries out the reaction Hydrolysis of proteins to small peptides in the presence of ATP and magnesium. alpha-casein is the usual test substrate. In the absence of ATP, only oligopeptides shorter than five residues are hydrolyzed (such as succinyl-Leu-Tyr-|-NHMec, and Leu-Tyr-Leu-|-Tyr-Trp, in which cleavage of the -Tyr-|-Leu- and -Tyr-|-Trp bonds also occurs).. Functionally, cleaves peptides in various proteins in a process that requires ATP hydrolysis. Has a chymotrypsin-like activity. Plays a major role in the degradation of misfolded proteins. In Sphingopyxis alaskensis (strain DSM 13593 / LMG 18877 / RB2256) (Sphingomonas alaskensis), this protein is ATP-dependent Clp protease proteolytic subunit.